The sequence spans 252 residues: Thiazole synthase (252 aa).

K91 (schiff-base intermediate with DXP) is an active-site residue. Residues G152, 179-180, and 201-202 each bind 1-deoxy-D-xylulose 5-phosphate; these read AG and NT.

This sequence belongs to the ThiG family. As to quaternary structure, homotetramer. Forms heterodimers with either ThiH or ThiS.

It localises to the cytoplasm. It catalyses the reaction [ThiS sulfur-carrier protein]-C-terminal-Gly-aminoethanethioate + 2-iminoacetate + 1-deoxy-D-xylulose 5-phosphate = [ThiS sulfur-carrier protein]-C-terminal Gly-Gly + 2-[(2R,5Z)-2-carboxy-4-methylthiazol-5(2H)-ylidene]ethyl phosphate + 2 H2O + H(+). The protein operates within cofactor biosynthesis; thiamine diphosphate biosynthesis. Catalyzes the rearrangement of 1-deoxy-D-xylulose 5-phosphate (DXP) to produce the thiazole phosphate moiety of thiamine. Sulfur is provided by the thiocarboxylate moiety of the carrier protein ThiS. In vitro, sulfur can be provided by H(2)S. This is Thiazole synthase from Gluconobacter oxydans (strain 621H) (Gluconobacter suboxydans).